The chain runs to 823 residues: MDNTYNPQEVEEQAQQYWHKKQSFNVTEDLNKEKFYCLSMFPYPSGTLHMGHVRNYTLGDVIARYQRALGKNVLQPIGWDAFGLPAENAAIKNKIPPAEWTRKNIAAMKEQFLRLGNAYDWKREITTCDPEYYRWEQWFFIRLFEKGLVYKKNAVVNWDPVDQTVLANEQVVDGRGWRSGALVERKEISQWFIKITSYADELLSSLDSLDEWPAQVKQMQRNWIGKSIGTEIYFNVNNYPKRLKIYTTRPDTLMGATYLAVATDHPLAKEAASNNKKVQEFLDSCQGIKIAEAELATMEKRGIDTGMTAIHPITGKELPIWVANFVLMQYGSGAVMAVPAHDQRDWEFAQKYQLPVKQVIKPIDIEHDFNQSAYTEEGILINSNQFDNLLSSKAIQVITNFLEENDAGKATINYRLRDWGVSRQRYWGTPIPMIICEQCGIVPVPDEELPVVLPENVDFTGTGSPLTQCKEFVNVTCPKCGQDANRETDTFDTFVESSWYYARFACKGQENAMLDDRAKYWTPVDQYIGGIEHAVMHLLYARFFHKLMRDEGLVNSDEPFKALLTQGMVLKDGHKMSKSLGNVVDPNHLINTYGADTARLFVMFASPPEQSLEWSDSGVEGAHRFLKRVWAFSHQHRDMLIDINDSILSGNGHVDWKEAESRLKKSRHIVHQILAQATHDYDRNQFNTVVSGCMKLFNEISDYSIETENDKFFIHSSISILLRLLAPITPHICHCLWQQLGFDKAIIDAPWPKVDKSALKTDEVDYVVQVNGKLRAQFTASTDASEEELIAAAKEHAHNFVVNHTIKKAIIVPHRQLINLVIG.

A 'HIGH' region motif is present at residues 42-52 (PYPSGTLHMGH). The short motif at 575 to 579 (KMSKS) is the 'KMSKS' region element. Position 578 (Lys578) interacts with ATP.

The protein belongs to the class-I aminoacyl-tRNA synthetase family.

It is found in the cytoplasm. The enzyme catalyses tRNA(Leu) + L-leucine + ATP = L-leucyl-tRNA(Leu) + AMP + diphosphate. The sequence is that of Leucine--tRNA ligase from Legionella pneumophila (strain Paris).